We begin with the raw amino-acid sequence, 421 residues long: MASTDSKQLYLFKKMLKELKSKKGKGTELISLYIPAGRRISDVAQHLREEMSQASNIKSKSTRKNVQSAIEAILQRLKLLKEPLEKGVVIFAGMVPRSGPGTEKMETYVIEPPEPIKTYIYRCDSEFYLEPLEEFLEDKDAYGVILVDRNEATIALVKGRNINILKKLTSGVPGKFKAGGQSARRLERLIDLAAHEFLQRVGQKANEQFLPLLQEKKLRGILVGGPGHTKNEFVEGDYLHHELKKIVLDTFDLCYTEEFGIRELLEKAAPLLKDVELMKEREAVQRFLKELIKEDGGLACYGEKEVLEALMMGAVDTLIVSEELEKYKVKIACNNCDYLEEKTVNKLELIKLEEELKNAQCPKCGGALSIVEEKDYIEYLSELCEQSGAKLVTVSSETEEGAMILNAFKGIAAILRYKIHQ.

This sequence belongs to the eukaryotic release factor 1 family. In terms of assembly, heterodimer of two subunits, one of which binds GTP.

The protein resides in the cytoplasm. In terms of biological role, directs the termination of nascent peptide synthesis (translation) in response to the termination codons UAA, UAG and UGA. This is Peptide chain release factor subunit 1 (prf1) from Methanocaldococcus jannaschii (strain ATCC 43067 / DSM 2661 / JAL-1 / JCM 10045 / NBRC 100440) (Methanococcus jannaschii).